We begin with the raw amino-acid sequence, 223 residues long: Phosphoribosylformylglycinamidine synthase subunit PurQ (223 aa).

The 221-residue stretch at 3-223 folds into the Glutamine amidotransferase type-1 domain; the sequence is FAVLVFPGSN…MVNSWREQNV (221 aa). Residue C85 is the Nucleophile of the active site. Active-site residues include H193 and E195.

In terms of assembly, part of the FGAM synthase complex composed of 1 PurL, 1 PurQ and 2 PurS subunits.

The protein localises to the cytoplasm. It catalyses the reaction N(2)-formyl-N(1)-(5-phospho-beta-D-ribosyl)glycinamide + L-glutamine + ATP + H2O = 2-formamido-N(1)-(5-O-phospho-beta-D-ribosyl)acetamidine + L-glutamate + ADP + phosphate + H(+). The enzyme catalyses L-glutamine + H2O = L-glutamate + NH4(+). It participates in purine metabolism; IMP biosynthesis via de novo pathway; 5-amino-1-(5-phospho-D-ribosyl)imidazole from N(2)-formyl-N(1)-(5-phospho-D-ribosyl)glycinamide: step 1/2. In terms of biological role, part of the phosphoribosylformylglycinamidine synthase complex involved in the purines biosynthetic pathway. Catalyzes the ATP-dependent conversion of formylglycinamide ribonucleotide (FGAR) and glutamine to yield formylglycinamidine ribonucleotide (FGAM) and glutamate. The FGAM synthase complex is composed of three subunits. PurQ produces an ammonia molecule by converting glutamine to glutamate. PurL transfers the ammonia molecule to FGAR to form FGAM in an ATP-dependent manner. PurS interacts with PurQ and PurL and is thought to assist in the transfer of the ammonia molecule from PurQ to PurL. In Staphylococcus haemolyticus (strain JCSC1435), this protein is Phosphoribosylformylglycinamidine synthase subunit PurQ.